We begin with the raw amino-acid sequence, 102 residues long: Putative lipid-transfer protein DIR1 (102 aa).

Residues 1–25 form the signal peptide; it reads MASKKAAMVMMAMIVIMAMLVDTSV. Intrachain disulfides connect cysteine 30–cysteine 67, cysteine 40–cysteine 56, cysteine 57–cysteine 94, and cysteine 69–cysteine 102. Glutamine 34 is an a 1-acyl-sn-glycero-3-phosphocholine binding site. Glutamate 36 contributes to the Zn(2+) binding site. Asparagine 38 is an a 1-acyl-sn-glycero-3-phosphocholine binding site. Zn(2+) is bound at residue histidine 62.

The protein belongs to the A9/FIL1 family. Self-interacts and binds to AZI1. Does not interact with PDLP1. It depends on Zn(2+) as a cofactor.

Its subcellular location is the secreted. It localises to the extracellular space. The protein localises to the apoplast. The protein resides in the endoplasmic reticulum. It is found in the cell junction. Its subcellular location is the plasmodesma. Its function is as follows. Putative lipid transfer protein required for systemic acquired resistance (SAR) long distance signaling. May interact with a lipid-derived molecule to promote long distance signaling associated with SAR. Together with AZI1, required for glycerol-3-phosphate- (G3P) and azelaic acid- (AA) induced systemic acquired resistance (SAR). Component of plant systemic immunity involved in priming defenses in a AA-dependent manner, by modulating production and/or translocation of a mobile signal(s) during SAR. Is able to bind with high affinity monoacylated phospholipids, mainly lysophosphatidylcholines. The protein is Putative lipid-transfer protein DIR1 (DIR1) of Arabidopsis thaliana (Mouse-ear cress).